A 120-amino-acid chain; its full sequence is NAD(P)H-quinone oxidoreductase subunit 3 (120 aa).

3 helical membrane passes run 2–22 (FVLT…LVPV), 64–84 (MFAL…PWAV), and 89–109 (LGLL…VALV).

This sequence belongs to the complex I subunit 3 family. NDH-1 can be composed of about 15 different subunits; different subcomplexes with different compositions have been identified which probably have different functions.

It localises to the cellular thylakoid membrane. It catalyses the reaction a plastoquinone + NADH + (n+1) H(+)(in) = a plastoquinol + NAD(+) + n H(+)(out). The catalysed reaction is a plastoquinone + NADPH + (n+1) H(+)(in) = a plastoquinol + NADP(+) + n H(+)(out). NDH-1 shuttles electrons from an unknown electron donor, via FMN and iron-sulfur (Fe-S) centers, to quinones in the respiratory and/or the photosynthetic chain. The immediate electron acceptor for the enzyme in this species is believed to be plastoquinone. Couples the redox reaction to proton translocation, and thus conserves the redox energy in a proton gradient. Cyanobacterial NDH-1 also plays a role in inorganic carbon-concentration. This chain is NAD(P)H-quinone oxidoreductase subunit 3 (ndhC), found in Synechocystis sp. (strain ATCC 27184 / PCC 6803 / Kazusa).